Here is a 101-residue protein sequence, read N- to C-terminus: CRISPR-associated endoribonuclease Cas2 (101 aa).

D8 is a Mg(2+) binding site.

Belongs to the CRISPR-associated endoribonuclease Cas2 protein family. Homodimer, forms a heterotetramer with a Cas1 homodimer. Mg(2+) is required as a cofactor.

Functionally, CRISPR (clustered regularly interspaced short palindromic repeat), is an adaptive immune system that provides protection against mobile genetic elements (viruses, transposable elements and conjugative plasmids). CRISPR clusters contain sequences complementary to antecedent mobile elements and target invading nucleic acids. CRISPR clusters are transcribed and processed into CRISPR RNA (crRNA). Functions as a ssRNA-specific endoribonuclease. Involved in the integration of spacer DNA into the CRISPR cassette. This chain is CRISPR-associated endoribonuclease Cas2, found in Parvibaculum lavamentivorans (strain DS-1 / DSM 13023 / NCIMB 13966).